A 355-amino-acid chain; its full sequence is UDP-3-O-acylglucosamine N-acyltransferase (355 aa).

Catalysis depends on His258, which acts as the Proton acceptor.

This sequence belongs to the transferase hexapeptide repeat family. LpxD subfamily. Homotrimer.

It carries out the reaction a UDP-3-O-[(3R)-3-hydroxyacyl]-alpha-D-glucosamine + a (3R)-hydroxyacyl-[ACP] = a UDP-2-N,3-O-bis[(3R)-3-hydroxyacyl]-alpha-D-glucosamine + holo-[ACP] + H(+). Its pathway is bacterial outer membrane biogenesis; LPS lipid A biosynthesis. Functionally, catalyzes the N-acylation of UDP-3-O-acylglucosamine using 3-hydroxyacyl-ACP as the acyl donor. Is involved in the biosynthesis of lipid A, a phosphorylated glycolipid that anchors the lipopolysaccharide to the outer membrane of the cell. This Bradyrhizobium sp. (strain BTAi1 / ATCC BAA-1182) protein is UDP-3-O-acylglucosamine N-acyltransferase.